We begin with the raw amino-acid sequence, 200 residues long: Ribosome maturation factor RimP (200 aa).

It belongs to the RimP family.

It localises to the cytoplasm. Its function is as follows. Required for maturation of 30S ribosomal subunits. In Polaromonas sp. (strain JS666 / ATCC BAA-500), this protein is Ribosome maturation factor RimP.